The primary structure comprises 736 residues: Catalase-1 (736 aa).

Positions 1-29 are disordered; that stretch reads MSNIISQAGQKAKEALTSAPSSKKVDDLK. Arg-89 is a heme binding site. His-92 is an active-site residue. Arg-129 contacts heme. Asn-165 is a catalytic residue. Residues Phe-178, Arg-375, Tyr-379, and Arg-386 each contribute to the heme site. The 3-(S-cysteinyl)-tyrosine (Cys-Tyr) cross-link spans 356-379; sequence CTSHVVNGIGFSDDPLLQGRNFSY.

The protein belongs to the catalase family. Homotetramer. It depends on heme as a cofactor. Glycosylated; with alpha-glucose and/or alpha-mannose.

The protein resides in the secreted. It is found in the cell wall. The enzyme catalyses 2 H2O2 = O2 + 2 H2O. Occurs in almost all aerobically respiring organisms and serves to protect cells from the toxic effects of hydrogen peroxide. This Neurospora crassa (strain ATCC 24698 / 74-OR23-1A / CBS 708.71 / DSM 1257 / FGSC 987) protein is Catalase-1 (cat-1).